The following is a 419-amino-acid chain: Maltoporin 2 (419 aa).

The first 23 residues, 1 to 23 (MKTSLRTLSVALAAALVSPSVLA), serve as a signal peptide directing secretion.

Belongs to the porin LamB (TC 1.B.3) family. Homotrimer formed of three 18-stranded antiparallel beta-barrels, containing three independent channels.

The protein localises to the cell outer membrane. The catalysed reaction is beta-maltose(in) = beta-maltose(out). Involved in the transport of maltose and maltodextrins. In Yersinia pseudotuberculosis serotype O:1b (strain IP 31758), this protein is Maltoporin 2.